The sequence spans 648 residues: GLAMAWAVLGPLLWGCALALQGGMLYPRESQSRERKELDGLWSFRADFSDNRRRGFEEQWYRRPLRESGPTLDMPVPSSFNDISQDWRLRHFVGWVWYEREVILPERWTQDLSTRVVLRIGSAHAYAIVWVNGVHTLEHEGGYLPFEADISNLVQVGPLSSHVRITIAINNTLTSTTLPPGTIQYLTDISKYPKGYFIQNTYFDFFNYAGLQRSVLLYTTPTAYIDDITVTTGVEHDTGLVNYQISVKGSNLFELEVRLLDAENKLVANGTGIQGQLKVPGARLWWPYLMHERPAYLYSLEVRLTAQTSLGPVSDFYTLPVGIRTVAVTESQFLINGKPFYFHGVNKHEDADIRGKGFDWPLLVKDFNLLRWLGANAFRTSHYPYAEEVLQMCDRYGIVVIDECPGVGLALPQFFNNVSLQNHMRVMEEVVRRDKNHPAVVMWSVANEPASHLESAGYYLKMVITHTKALDPSRPVTFVTNSNYAADKGAPYVDVICLNSYYSWYHDYGHLELIQRQLTTQFENWYKTYQKPIIQSEYGAETIVGFHQDPPLMFTEEYQKSLLEQYHVVLDQKRRKYVVGELIWNFADFMTEQSPTRVLGNKKGVFTRQRQPKSAAFLLRERYWKIANETRYPHSIAKSQCLENSPFT.

A signal peptide spans 1 to 19 (GLAMAWAVLGPLLWGCALA). Asn170, Asn269, and Asn417 each carry an N-linked (GlcNAc...) asparagine glycan. Glu448 (proton donor) is an active-site residue. N-linked (GlcNAc...) asparagine glycosylation occurs at Asn628.

Belongs to the glycosyl hydrolase 2 family. Homotetramer.

The protein localises to the lysosome. It carries out the reaction a beta-D-glucuronoside + H2O = D-glucuronate + an alcohol. Its activity is regulated as follows. Inhibited by L-aspartic acid. Its function is as follows. Plays an important role in the degradation of dermatan and keratan sulfates. This chain is Beta-glucuronidase (GUSB), found in Chlorocebus aethiops (Green monkey).